A 369-amino-acid chain; its full sequence is Glutamate 5-kinase (369 aa).

Lysine 14 provides a ligand contact to ATP. Substrate-binding residues include serine 56, aspartate 143, and asparagine 155. ATP contacts are provided by residues 175 to 176 and 215 to 221; these read SD and TGGMASK. Residues 277–351 form the PUA domain; the sequence is AGKIRLDDGA…GMQTQDLPDG (75 aa).

Belongs to the glutamate 5-kinase family.

It localises to the cytoplasm. It carries out the reaction L-glutamate + ATP = L-glutamyl 5-phosphate + ADP. It participates in amino-acid biosynthesis; L-proline biosynthesis; L-glutamate 5-semialdehyde from L-glutamate: step 1/2. Catalyzes the transfer of a phosphate group to glutamate to form L-glutamate 5-phosphate. This chain is Glutamate 5-kinase, found in Corynebacterium glutamicum (strain ATCC 13032 / DSM 20300 / JCM 1318 / BCRC 11384 / CCUG 27702 / LMG 3730 / NBRC 12168 / NCIMB 10025 / NRRL B-2784 / 534).